The chain runs to 307 residues: Auxiliary protein GraX (307 aa).

In terms of assembly, homodimer. Interacts with GraR and GraS.

Its function is as follows. Plays a role in resistance against cationic antimicrobial peptides (CAMPs). Facilitates the activation of GraS to transduce the signal to GraR. In Staphylococcus aureus (strain NCTC 8325 / PS 47), this protein is Auxiliary protein GraX (graX).